A 368-amino-acid polypeptide reads, in one-letter code: Putative phospho-2-dehydro-3-deoxyheptonate aldolase (368 aa).

It belongs to the class-I DAHP synthase family.

The catalysed reaction is D-erythrose 4-phosphate + phosphoenolpyruvate + H2O = 7-phospho-2-dehydro-3-deoxy-D-arabino-heptonate + phosphate. It participates in metabolic intermediate biosynthesis; chorismate biosynthesis; chorismate from D-erythrose 4-phosphate and phosphoenolpyruvate: step 1/7. Functionally, stereospecific condensation of phosphoenolpyruvate (PEP) and D-erythrose-4-phosphate (E4P) giving rise to 3-deoxy-D-arabino-heptulosonate-7-phosphate (DAHP). The sequence is that of Putative phospho-2-dehydro-3-deoxyheptonate aldolase from Schizosaccharomyces pombe (strain 972 / ATCC 24843) (Fission yeast).